Here is a 787-residue protein sequence, read N- to C-terminus: DNA ligase (787 aa).

NAD(+)-binding positions include 32–36 (DVEYD), 81–82 (SL), and Glu-121. The N6-AMP-lysine intermediate role is filled by Lys-123. Arg-144, Glu-181, Lys-297, and Lys-321 together coordinate NAD(+). The Zn(2+) site is built by Cys-415, Cys-418, Cys-445, and Cys-451. One can recognise a BRCT domain in the interval 703–787 (VEGLPLAGQT…RLIELGVAVD (85 aa)).

Belongs to the NAD-dependent DNA ligase family. LigA subfamily. Mg(2+) serves as cofactor. It depends on Mn(2+) as a cofactor.

It carries out the reaction NAD(+) + (deoxyribonucleotide)n-3'-hydroxyl + 5'-phospho-(deoxyribonucleotide)m = (deoxyribonucleotide)n+m + AMP + beta-nicotinamide D-nucleotide.. In terms of biological role, DNA ligase that catalyzes the formation of phosphodiester linkages between 5'-phosphoryl and 3'-hydroxyl groups in double-stranded DNA using NAD as a coenzyme and as the energy source for the reaction. It is essential for DNA replication and repair of damaged DNA. The protein is DNA ligase of Pseudomonas syringae pv. syringae (strain B728a).